Reading from the N-terminus, the 329-residue chain is Transcription factor MYB2 (329 aa).

2 HTH myb-type domains span residues 17–69 (GGDL…LNYL) and 70–124 (RPDL…QKHA). 2 DNA-binding regions (H-T-H motif) span residues 45–69 (WNSL…LNYL) and 97–120 (WSKI…RTRV). Low complexity-rich tracts occupy residues 155–166 (AAAGQQQQQEGG) and 217–235 (LSST…GAGA). Disordered stretches follow at residues 155-189 (AAAG…PELP) and 206-242 (GAQS…WPTQ).

As to expression, highly expressed in leaves. Expressed in roots and shoots. Expressed at low levels in flowers.

Its subcellular location is the nucleus. In terms of biological role, transcription factor involved in abiotic stress responses. Plays a regulatory role in tolerance to salt, cold, and drought stresses. Positively regulates the expression of genes involved in proline synthesis and transport, and genes involved in reactive oxygen species (ROS) scavenging such as peroxidase, superoxide dismutase and catalase during salt stress. Transactivates stress-related genes, including LEA3, RAB16A and DREB2A during salt stress. The polypeptide is Transcription factor MYB2 (Oryza sativa subsp. japonica (Rice)).